A 68-amino-acid chain; its full sequence is Small ribosomal subunit protein bS21 (68 aa).

The segment covering glutamate 37–alanine 49 has biased composition (basic and acidic residues). Positions glutamate 37–lysine 68 are disordered. A compositionally biased stretch (basic residues) spans alanine 50–arginine 59.

The protein belongs to the bacterial ribosomal protein bS21 family.

In Erythrobacter litoralis (strain HTCC2594), this protein is Small ribosomal subunit protein bS21.